The following is a 1035-amino-acid chain: Unconventional myosin IC (1035 aa).

In terms of domain architecture, Myosin motor spans 21-703 (GVQDFVLLEN…TLFDTEDAYQ (683 aa)). 114–121 (GESGSGKT) contributes to the ATP binding site. Ser304 carries the phosphoserine modification. Thr310 bears the Phosphothreonine mark. Residues 578–600 (LNNLMDILMCKEPSYIRCIKPND) form an actin-binding region. IQ domains are found at residues 696–728 (FDTEDAYQEKKHEIAAIIQAHWKGLMQRRKYLK), 729–751 (LRAQVIIMQSYCRRKLAQQAAKK), and 752–779 (RREAADKIRAFIKGFITRNDAPNGFNEE). Positions 857 to 1035 (KNNYASSVST…KGHLVIIGTQ (179 aa)) constitute a TH1 domain.

The protein belongs to the TRAFAC class myosin-kinesin ATPase superfamily. Myosin family. In terms of assembly, binds F-actin. In the embryo, expressed in gastric caeca, midgut cells of the proventriculus, and in the mid and hindgut. In the larval and adult gut brush border, expressed in the microvilli. Also expressed at high levels in follicle cells during oogenesis.

It localises to the cytoplasm. The protein localises to the cell cortex. Its subcellular location is the cell membrane. Its function is as follows. Unconventional myosin that functions as actin-based motor protein with ATPase activity. Binds to membranes enriched in phosphatidylinositol 4-5-bisphosphate, and can glide along actin filaments when anchored to a lipid bilayer. Functions as antagonist for Myo31DF, an unconventional myosin with an essential role in the establishment of body left-right asymmetry. This Drosophila melanogaster (Fruit fly) protein is Unconventional myosin IC (Myo61F).